Consider the following 168-residue polypeptide: Urease accessory protein UreE (168 aa).

The disordered stretch occupies residues 145–168 (EGGAYAAGQGGGHGPHGQHTHPHH).

The protein belongs to the UreE family.

The protein resides in the cytoplasm. Its function is as follows. Involved in urease metallocenter assembly. Binds nickel. Probably functions as a nickel donor during metallocenter assembly. In Verminephrobacter eiseniae (strain EF01-2), this protein is Urease accessory protein UreE.